Here is a 159-residue protein sequence, read N- to C-terminus: Ribosomal RNA large subunit methyltransferase H (159 aa).

Positions 76 and 108 each coordinate S-adenosyl-L-methionine.

It belongs to the RNA methyltransferase RlmH family. In terms of assembly, homodimer.

The protein resides in the cytoplasm. It catalyses the reaction pseudouridine(1915) in 23S rRNA + S-adenosyl-L-methionine = N(3)-methylpseudouridine(1915) in 23S rRNA + S-adenosyl-L-homocysteine + H(+). In terms of biological role, specifically methylates the pseudouridine at position 1915 (m3Psi1915) in 23S rRNA. The chain is Ribosomal RNA large subunit methyltransferase H from Finegoldia magna (strain ATCC 29328 / DSM 20472 / WAL 2508) (Peptostreptococcus magnus).